The sequence spans 66 residues: Large ribosomal subunit protein bL35 (66 aa).

A disordered region spans residues 19–45 (SGKVVAAQSTKRHGMTKRSKRSLRTRR). Residues 28–45 (TKRHGMTKRSKRSLRTRR) show a composition bias toward basic residues.

Belongs to the bacterial ribosomal protein bL35 family.

This is Large ribosomal subunit protein bL35 from Anaplasma phagocytophilum (strain HZ).